The following is a 145-amino-acid chain: Hemoglobin subunit beta-A (145 aa).

The region spanning 1-145 (MLTAEEKAAV…VANALAHRYH (145 aa)) is the Globin domain. The heme b site is built by His62 and His91.

The protein belongs to the globin family. Heterotetramer of two alpha chains and two beta chains. As to expression, red blood cells.

Its function is as follows. Involved in oxygen transport from the lung to the various peripheral tissues. The sequence is that of Hemoglobin subunit beta-A from Capra hircus (Goat).